Consider the following 111-residue polypeptide: Anti-adapter protein IraM (111 aa).

It belongs to the IraM/RssC family.

It localises to the cytoplasm. In terms of biological role, inhibits RpoS proteolysis by regulating RssB activity, thereby increasing the stability of the sigma stress factor RpoS during magnesium starvation. This chain is Anti-adapter protein IraM, found in Escherichia coli O127:H6 (strain E2348/69 / EPEC).